Consider the following 1034-residue polypeptide: Receptor-type guanylate cyclase gcy-25 (1034 aa).

Positions 1–16 (MLLLLLLLKISTFVDS) are cleaved as a signal peptide. The Extracellular portion of the chain corresponds to 17 to 409 (FQIGHLEFEN…YDNNLCSDFH (393 aa)). Residues asparagine 28, asparagine 224, asparagine 301, asparagine 308, and asparagine 373 are each glycosylated (N-linked (GlcNAc...) asparagine). The chain crosses the membrane as a helical span at residues 410–430 (VFMIAAIVFSILLIPMAIAFY). The Cytoplasmic segment spans residues 431 to 1034 (LQRKEHLIQQ…DNSKKMFLNV (604 aa)). The region spanning 464 to 749 (RVSTISTARA…KITDAVNREF (286 aa)) is the Protein kinase domain. ATP-binding positions include 470–478 (TARASYSSI) and lysine 497. Positions 758-785 (IDQMIEMIDEYSANLEQIVAERTRELEQ) form a coiled coil. Residues 821–951 (TLLVVDVCQF…DTVNMACRMA (131 aa)) enclose the Guanylate cyclase domain.

It belongs to the adenylyl cyclase class-4/guanylyl cyclase family. In terms of tissue distribution, expressed in AQR, PQR and URX sensory neurons.

The protein resides in the cell membrane. The catalysed reaction is GTP = 3',5'-cyclic GMP + diphosphate. Functionally, guanylate cyclase involved in the production of the second messenger cGMP. This chain is Receptor-type guanylate cyclase gcy-25, found in Caenorhabditis elegans.